Consider the following 1009-residue polypeptide: Epididymis-specific alpha-mannosidase (1009 aa).

Positions 1-23 (MGQLCWLPLLAPLLLLRPPGVQS) are cleaved as a signal peptide. Positions 36, 38, and 151 each coordinate Zn(2+). Asp151 functions as the Nucleophile in the catalytic mechanism. N-linked (GlcNAc...) asparagine glycosylation is found at Asn226, Asn249, Asn294, and Asn336. Residue His420 participates in Zn(2+) binding. Residues Asn516, Asn608, Asn670, Asn675, Asn748, Asn808, Asn812, and Asn890 are each glycosylated (N-linked (GlcNAc...) asparagine). Positions 972 to 991 (GPGRHRGDTTSPSRPPGGPI) are disordered.

The protein belongs to the glycosyl hydrolase 38 family. The cofactor is Zn(2+).

The protein resides in the secreted. The enzyme catalyses Hydrolysis of terminal, non-reducing alpha-D-mannose residues in alpha-D-mannosides.. The protein is Epididymis-specific alpha-mannosidase (MAN2B2) of Homo sapiens (Human).